The sequence spans 841 residues: Probable inorganic carbon transporter subunit DabA 1 (841 aa).

Residues cysteine 352, aspartate 354, histidine 536, and cysteine 551 each contribute to the Zn(2+) site.

This sequence belongs to the inorganic carbon transporter (TC 9.A.2) DabA family. In terms of assembly, forms a complex with DabB. The cofactor is Zn(2+).

The protein localises to the cell inner membrane. In terms of biological role, part of an energy-coupled inorganic carbon pump. The chain is Probable inorganic carbon transporter subunit DabA 1 from Bradyrhizobium sp. (strain ORS 278).